The chain runs to 317 residues: Ribosomal protein L11 methyltransferase (317 aa).

Residues threonine 158, glycine 179, aspartate 201, and asparagine 244 each coordinate S-adenosyl-L-methionine.

It belongs to the methyltransferase superfamily. PrmA family.

The protein resides in the cytoplasm. The enzyme catalyses L-lysyl-[protein] + 3 S-adenosyl-L-methionine = N(6),N(6),N(6)-trimethyl-L-lysyl-[protein] + 3 S-adenosyl-L-homocysteine + 3 H(+). Its function is as follows. Methylates ribosomal protein L11. The sequence is that of Ribosomal protein L11 methyltransferase from Streptococcus pyogenes serotype M18 (strain MGAS8232).